A 193-amino-acid polypeptide reads, in one-letter code: MIGRIAGTLLEKNPPHILVDCNGVGYEVDVPMSTFYNLPHTGEKVVLLTQLIVREDAHLLYGFLTPPERSTFRELLKITGVGARMALAVLSGMSVAELSQAVTLQDAARLTRVPGIGKKTAERLLLELKGKLGADLGPLAGAASPSDHATDILNALVALGYSEKEALAAIKNVPAGTGVSEGIKLSLKALSKA.

Positions 1 to 64 are domain I; that stretch reads MIGRIAGTLL…EDAHLLYGFL (64 aa). Residues 65-139 are domain II; that stretch reads TPPERSTFRE…GKLGADLGPL (75 aa). Residues 139–143 are flexible linker; it reads LAGAA. The interval 144-193 is domain III; it reads SPSDHATDILNALVALGYSEKEALAAIKNVPAGTGVSEGIKLSLKALSKA.

It belongs to the RuvA family. Homotetramer. Forms an RuvA(8)-RuvB(12)-Holliday junction (HJ) complex. HJ DNA is sandwiched between 2 RuvA tetramers; dsDNA enters through RuvA and exits via RuvB. An RuvB hexamer assembles on each DNA strand where it exits the tetramer. Each RuvB hexamer is contacted by two RuvA subunits (via domain III) on 2 adjacent RuvB subunits; this complex drives branch migration. In the full resolvosome a probable DNA-RuvA(4)-RuvB(12)-RuvC(2) complex forms which resolves the HJ.

The protein resides in the cytoplasm. Its function is as follows. The RuvA-RuvB-RuvC complex processes Holliday junction (HJ) DNA during genetic recombination and DNA repair, while the RuvA-RuvB complex plays an important role in the rescue of blocked DNA replication forks via replication fork reversal (RFR). RuvA specifically binds to HJ cruciform DNA, conferring on it an open structure. The RuvB hexamer acts as an ATP-dependent pump, pulling dsDNA into and through the RuvAB complex. HJ branch migration allows RuvC to scan DNA until it finds its consensus sequence, where it cleaves and resolves the cruciform DNA. The polypeptide is Holliday junction branch migration complex subunit RuvA (Burkholderia mallei (strain NCTC 10229)).